The chain runs to 507 residues: ATP synthase subunit alpha, chloroplastic (507 aa).

170–177 (GDRQTGKT) contributes to the ATP binding site.

Belongs to the ATPase alpha/beta chains family. As to quaternary structure, F-type ATPases have 2 components, CF(1) - the catalytic core - and CF(0) - the membrane proton channel. CF(1) has five subunits: alpha(3), beta(3), gamma(1), delta(1), epsilon(1). CF(0) has four main subunits: a, b, b' and c.

It localises to the plastid. The protein resides in the chloroplast thylakoid membrane. The enzyme catalyses ATP + H2O + 4 H(+)(in) = ADP + phosphate + 5 H(+)(out). Produces ATP from ADP in the presence of a proton gradient across the membrane. The alpha chain is a regulatory subunit. This Drimys granadensis protein is ATP synthase subunit alpha, chloroplastic.